Reading from the N-terminus, the 197-residue chain is Casparian strip membrane protein 5 (197 aa).

The Cytoplasmic segment spans residues 1 to 34; sequence MSTTIDMPGSSKAAKAGKPVLVTTPSRPGGWKKG. The helical transmembrane segment at 35-55 threads the bilayer; that stretch reads VAIMDFILRLGAIAAALGAAA. Over 56-84 the chain is Extracellular; it reads TMGLSDQTLPFFTQFFQFEASYDSFTTFQ. A helical membrane pass occupies residues 85–105; it reads FFVITMALVAGYLVLSLPLSI. The Cytoplasmic segment spans residues 106 to 117; it reads VAVVRPHAAGPR. A helical membrane pass occupies residues 118–138; the sequence is LFLIILDTVFLTLATASGASA. At 139–171 the chain is on the extracellular side; the sequence is ASIVYLAHNGNQDTNWIAICNQFGDFCAQTSGA. Residues 172–192 form a helical membrane-spanning segment; sequence VVSSLVAVLVFVLLIVMSALV. The Cytoplasmic portion of the chain corresponds to 193–197; sequence LGKKH.

It belongs to the Casparian strip membrane proteins (CASP) family. In terms of assembly, homodimer and heterodimers.

It is found in the cell membrane. In terms of biological role, regulates membrane-cell wall junctions and localized cell wall deposition. Required for establishment of the Casparian strip membrane domain (CSD) and the subsequent formation of Casparian strips, a cell wall modification of the root endodermis that determines an apoplastic barrier between the intraorganismal apoplasm and the extraorganismal apoplasm and prevents lateral diffusion. The sequence is that of Casparian strip membrane protein 5 from Lotus japonicus (Lotus corniculatus var. japonicus).